Here is a 608-residue protein sequence, read N- to C-terminus: UvrABC system protein C (608 aa).

The GIY-YIG domain occupies 13-91 (HKPGVYIMHD…IKKNSPKYNI (79 aa)). In terms of domain architecture, UVR spans 202–237 (DELTKKLTDKMMAASKNLNFELAAKLRDSITNIQVI).

This sequence belongs to the UvrC family. As to quaternary structure, interacts with UvrB in an incision complex.

The protein resides in the cytoplasm. Functionally, the UvrABC repair system catalyzes the recognition and processing of DNA lesions. UvrC both incises the 5' and 3' sides of the lesion. The N-terminal half is responsible for the 3' incision and the C-terminal half is responsible for the 5' incision. The sequence is that of UvrABC system protein C from Finegoldia magna (strain ATCC 29328 / DSM 20472 / WAL 2508) (Peptostreptococcus magnus).